Reading from the N-terminus, the 465-residue chain is Cysteine--tRNA ligase (465 aa).

Residue cysteine 28 coordinates Zn(2+). The 'HIGH' region signature appears at 30 to 40 (MTVYDYCHLGH). Positions 209, 234, and 238 each coordinate Zn(2+). The 'KMSKS' region motif lies at 266-270 (KMSKS). Lysine 269 serves as a coordination point for ATP.

It belongs to the class-I aminoacyl-tRNA synthetase family. Monomer. The cofactor is Zn(2+).

The protein localises to the cytoplasm. It catalyses the reaction tRNA(Cys) + L-cysteine + ATP = L-cysteinyl-tRNA(Cys) + AMP + diphosphate. This is Cysteine--tRNA ligase from Methylococcus capsulatus (strain ATCC 33009 / NCIMB 11132 / Bath).